The chain runs to 574 residues: Putative diflavin flavoprotein A 3 (574 aa).

Residues 43 to 236 form a zinc metallo-hydrolase region; sequence QNGTTYNSFL…PSVKMIATGH (194 aa). 6 residues coordinate Fe cation: His92, Glu94, Asp96, His159, Asp178, and His236. Positions 265-409 constitute a Flavodoxin-like domain; sequence IGVFYVSEYG…DLGQWVTRDR (145 aa). A flavodoxin-reductase-like region spans residues 410–574; the sequence is SIKAMKSLGA…VHHRKVGNHY (165 aa).

This sequence in the N-terminal section; belongs to the zinc metallo-hydrolase group 3 family. In the C-terminal section; belongs to the flavodoxin reductase family. Fe cation serves as cofactor.

Its function is as follows. Mediates electron transfer from NADH to oxygen, reducing it to water. This modular protein has 3 redox cofactors, in other organisms the same activity requires 2 or 3 proteins. The sequence is that of Putative diflavin flavoprotein A 3 (dfa3) from Nostoc sp. (strain PCC 7120 / SAG 25.82 / UTEX 2576).